A 129-amino-acid chain; its full sequence is Aspartate 1-decarboxylase (129 aa).

Catalysis depends on S25, which acts as the Schiff-base intermediate with substrate; via pyruvic acid. S25 carries the pyruvic acid (Ser) modification. T57 is a substrate binding site. The active-site Proton donor is the Y58. 73–75 (GAA) is a binding site for substrate.

The protein belongs to the PanD family. As to quaternary structure, heterooctamer of four alpha and four beta subunits. Pyruvate serves as cofactor. Post-translationally, is synthesized initially as an inactive proenzyme, which is activated by self-cleavage at a specific serine bond to produce a beta-subunit with a hydroxyl group at its C-terminus and an alpha-subunit with a pyruvoyl group at its N-terminus.

The protein localises to the cytoplasm. The catalysed reaction is L-aspartate + H(+) = beta-alanine + CO2. Its pathway is cofactor biosynthesis; (R)-pantothenate biosynthesis; beta-alanine from L-aspartate: step 1/1. Functionally, catalyzes the pyruvoyl-dependent decarboxylation of aspartate to produce beta-alanine. In Prosthecochloris aestuarii (strain DSM 271 / SK 413), this protein is Aspartate 1-decarboxylase.